A 1217-amino-acid chain; its full sequence is Valine--tRNA ligase (1217 aa).

The GST C-terminal domain maps to 27 to 155; the sequence is NAKQQSQVWQ…ISLCEKMVPV (129 aa). Positions 293–303 match the 'HIGH' region motif; that stretch reads PNVTGSLHLGH. The 'KMSKS' region motif lies at 809–813; sequence KMSKS. Lys812 contributes to the ATP binding site.

It belongs to the class-I aminoacyl-tRNA synthetase family.

The catalysed reaction is tRNA(Val) + L-valine + ATP = L-valyl-tRNA(Val) + AMP + diphosphate. This chain is Valine--tRNA ligase (vars1), found in Takifugu rubripes (Japanese pufferfish).